The sequence spans 331 residues: N-arachidonyl glycine receptor (331 aa).

The Extracellular portion of the chain corresponds to 1 to 26 (MAIPSNRDQLALSNGSHPEEYKIAAL). N-linked (GlcNAc...) asparagine glycosylation is present at Asn-14. The chain crosses the membrane as a helical span at residues 27 to 47 (VFYSCIFLIGLLVNVTALWVF). The Cytoplasmic segment spans residues 48–56 (SCTTKKRTT). The helical transmembrane segment at 57 to 77 (VTIYMMNVALLDLVFILSLPF) threads the bilayer. The Extracellular segment spans residues 78 to 95 (RMFYYAKGEWPFGDYFCH). Cys-94 and Cys-172 are oxidised to a cystine. Residues 96-116 (ILGALVVFYPSLALWLLALIS) form a helical membrane-spanning segment. Topologically, residues 117-138 (ADRYMAIVQPKYAKELKNTGKA) are cytoplasmic. Residues 139–159 (VLACVGVWIMTLTTTVPLLLL) form a helical membrane-spanning segment. Topologically, residues 160-191 (DEDPDKASSPATCLKISDIIHLKAVNVLNFTR) are extracellular. The N-linked (GlcNAc...) asparagine glycan is linked to Asn-188. Residues 192 to 212 (LIFFFLIPLFIMIGCYVVIIH) form a helical membrane-spanning segment. The Cytoplasmic portion of the chain corresponds to 213-236 (SLLRGQTSKLKPKVKEKSIRIIVT). A helical transmembrane segment spans residues 237–257 (LLLQVLACFVPFHICFALLML). The Extracellular portion of the chain corresponds to 258-268 (QGEENSYSPWG). A helical transmembrane segment spans residues 269-289 (AFTTFLMNLSTCLDVVLYYIV). Over 290–331 (SKQFQARVISVMLYRNYLRSVRRKSVRSGSLRSLSNMNSEML) the chain is Cytoplasmic. The residue at position 322 (Ser-322) is a Phosphoserine.

Belongs to the G-protein coupled receptor 1 family. As to expression, expressed in testis, spleen and brain (at protein level).

It localises to the cell membrane. It is found in the cytoplasmic vesicle membrane. Its function is as follows. G protein-coupled receptor (GPCR) that plays a role in diverse physiological processes particularly within the immune and nervous systems. Becomes active when triggered by various endogenous ligands including endocannabinoid N-arachidonyl glycine (NAGly), delta-9-tetrahydrocannabinol or resolvin D2/RvD2 derived from the omega-3 fatty acid docosahexaenoic acid (DHA). Upon RvD2 binding, facilitates the resolution of inflammation, aiding in tissue repair and homeostasis. Mechanistically, RvD2 ligation initiates Galphas protein coupling, activation of cAMP-PKA signaling pathway and phosphorylation of STAT3, leading to RvD2-stimulated macrophage phagocytosis. Mediates NAGly-induced process of reorganization of actin filaments and induction of acrosomal exocytosis. Activation by N-arachidonoyl glycine (NAGly) can also induce apoptosis in macrophages. Plays a role in homeostasis of CD8+ subsets of intraepithelial lymphocytes (IELs) (CD8alphaalpha and CD8alphabeta IELs) in small intestine by supporting preferential migration of CD8alphaalpha T-cells to intraepithelial compartment over lamina propria compartment, and by mediating their reconstitution into small intestine after bone marrow transplant. Participates also in hypotensive responses, mediating reduction in intraocular and blood pressure. The chain is N-arachidonyl glycine receptor from Rattus norvegicus (Rat).